A 145-amino-acid chain; its full sequence is Transcription factor MEE8 (145 aa).

Over residues E33–R49 the composition is skewed to basic and acidic residues. The disordered stretch occupies residues E33 to V61. Positions D66–L115 constitute a bHLH domain.

In terms of assembly, homodimer.

It is found in the nucleus. Functionally, required during early embryo development, for the endosperm formation. This chain is Transcription factor MEE8 (MEE8), found in Arabidopsis thaliana (Mouse-ear cress).